The sequence spans 99 residues: Large ribosomal subunit protein eL36A (99 aa).

The protein belongs to the eukaryotic ribosomal protein eL36 family. In terms of assembly, component of the large ribosomal subunit (LSU). Mature yeast ribosomes consist of a small (40S) and a large (60S) subunit. The 40S small subunit contains 1 molecule of ribosomal RNA (18S rRNA) and at least 33 different proteins. The large 60S subunit contains 3 rRNA molecules (25S, 5.8S and 5S rRNA) and at least 46 different proteins.

The protein localises to the cytoplasm. Component of the ribosome, a large ribonucleoprotein complex responsible for the synthesis of proteins in the cell. The small ribosomal subunit (SSU) binds messenger RNAs (mRNAs) and translates the encoded message by selecting cognate aminoacyl-transfer RNA (tRNA) molecules. The large subunit (LSU) contains the ribosomal catalytic site termed the peptidyl transferase center (PTC), which catalyzes the formation of peptide bonds, thereby polymerizing the amino acids delivered by tRNAs into a polypeptide chain. The nascent polypeptides leave the ribosome through a tunnel in the LSU and interact with protein factors that function in enzymatic processing, targeting, and the membrane insertion of nascent chains at the exit of the ribosomal tunnel. In Schizosaccharomyces pombe (strain 972 / ATCC 24843) (Fission yeast), this protein is Large ribosomal subunit protein eL36A (rpl3601).